The sequence spans 67 residues: Large ribosomal subunit protein eL24 (67 aa).

Zn(2+) contacts are provided by Cys-7, Cys-10, Cys-33, and Cys-37. The C4-type zinc finger occupies 7–37; it reads CSYCGKEFEPGTGKMYVRNDGRVYFFCSRKC.

Belongs to the eukaryotic ribosomal protein eL24 family. In terms of assembly, part of the 50S ribosomal subunit. Forms a cluster with proteins L3 and L14. It depends on Zn(2+) as a cofactor.

In terms of biological role, binds to the 23S rRNA. In Thermococcus sibiricus (strain DSM 12597 / MM 739), this protein is Large ribosomal subunit protein eL24.